The primary structure comprises 303 residues: Recombination-associated protein RdgC (303 aa).

The protein belongs to the RdgC family.

The protein localises to the cytoplasm. It localises to the nucleoid. May be involved in recombination. The sequence is that of Recombination-associated protein RdgC from Yersinia pseudotuberculosis serotype O:1b (strain IP 31758).